A 275-amino-acid chain; its full sequence is Large ribosomal subunit protein uL2 (275 aa).

The tract at residues 219 to 263 (EVRGAAMNPRDHPHGGGEGRAPRGMPTPKTKWGKPARGVKTRHNP) is disordered. Basic and acidic residues predominate over residues 227–239 (PRDHPHGGGEGRA). Positions 249 to 262 (KWGKPARGVKTRHN) are enriched in basic residues.

It belongs to the universal ribosomal protein uL2 family. As to quaternary structure, part of the 50S ribosomal subunit. Forms a bridge to the 30S subunit in the 70S ribosome.

Its function is as follows. One of the primary rRNA binding proteins. Required for association of the 30S and 50S subunits to form the 70S ribosome, for tRNA binding and peptide bond formation. It has been suggested to have peptidyltransferase activity; this is somewhat controversial. Makes several contacts with the 16S rRNA in the 70S ribosome. This is Large ribosomal subunit protein uL2 from Roseiflexus castenholzii (strain DSM 13941 / HLO8).